Reading from the N-terminus, the 176-residue chain is MNIKSLIRTIPDYPKPGIQFRDITTLLKDASGLRQVVDALVERYAGAKVDKVVGIESRGFIVGAAVAYELGVGFVPVRKKGKLPGDVLGHDYALEYGTDRVEIHSDAISPDEHVLLLDDLIATGGTAEAAAILIEKLGGHVLECAFIIGLPDLGGERKLRVLGYKTFSLCQFEDSE.

Belongs to the purine/pyrimidine phosphoribosyltransferase family. In terms of assembly, homodimer.

Its subcellular location is the cytoplasm. The catalysed reaction is AMP + diphosphate = 5-phospho-alpha-D-ribose 1-diphosphate + adenine. Its pathway is purine metabolism; AMP biosynthesis via salvage pathway; AMP from adenine: step 1/1. Its function is as follows. Catalyzes a salvage reaction resulting in the formation of AMP, that is energically less costly than de novo synthesis. The polypeptide is Adenine phosphoribosyltransferase (Methylobacillus flagellatus (strain ATCC 51484 / DSM 6875 / VKM B-1610 / KT)).